The chain runs to 457 residues: Siroheme synthase (457 aa).

The tract at residues Met1–Thr204 is precorrin-2 dehydrogenase /sirohydrochlorin ferrochelatase. Residues Asp22–Val23 and Leu43–Thr44 contribute to the NAD(+) site. Position 128 is a phosphoserine (Ser128). Residues Gly216–Tyr457 are uroporphyrinogen-III C-methyltransferase. S-adenosyl-L-methionine is bound at residue Pro225. Asp248 serves as the catalytic Proton acceptor. The active-site Proton donor is Lys270. S-adenosyl-L-methionine is bound by residues Gly301–Asp303, Ile306, Thr331–Ala332, Met382, and Gly411.

The protein in the N-terminal section; belongs to the precorrin-2 dehydrogenase / sirohydrochlorin ferrochelatase family. It in the C-terminal section; belongs to the precorrin methyltransferase family.

The catalysed reaction is uroporphyrinogen III + 2 S-adenosyl-L-methionine = precorrin-2 + 2 S-adenosyl-L-homocysteine + H(+). It carries out the reaction precorrin-2 + NAD(+) = sirohydrochlorin + NADH + 2 H(+). The enzyme catalyses siroheme + 2 H(+) = sirohydrochlorin + Fe(2+). It functions in the pathway cofactor biosynthesis; adenosylcobalamin biosynthesis; precorrin-2 from uroporphyrinogen III: step 1/1. The protein operates within cofactor biosynthesis; adenosylcobalamin biosynthesis; sirohydrochlorin from precorrin-2: step 1/1. It participates in porphyrin-containing compound metabolism; siroheme biosynthesis; precorrin-2 from uroporphyrinogen III: step 1/1. Its pathway is porphyrin-containing compound metabolism; siroheme biosynthesis; siroheme from sirohydrochlorin: step 1/1. It functions in the pathway porphyrin-containing compound metabolism; siroheme biosynthesis; sirohydrochlorin from precorrin-2: step 1/1. Functionally, multifunctional enzyme that catalyzes the SAM-dependent methylations of uroporphyrinogen III at position C-2 and C-7 to form precorrin-2 via precorrin-1. Then it catalyzes the NAD-dependent ring dehydrogenation of precorrin-2 to yield sirohydrochlorin. Finally, it catalyzes the ferrochelation of sirohydrochlorin to yield siroheme. This Salmonella heidelberg (strain SL476) protein is Siroheme synthase.